The primary structure comprises 339 residues: Heat-inducible transcription repressor HrcA (339 aa).

Belongs to the HrcA family.

Functionally, negative regulator of class I heat shock genes (grpE-dnaK-dnaJ and groELS operons). Prevents heat-shock induction of these operons. The sequence is that of Heat-inducible transcription repressor HrcA from Cutibacterium acnes (strain DSM 16379 / KPA171202) (Propionibacterium acnes).